The following is a 956-amino-acid chain: Cytolysin RtxA (956 aa).

The segment at 48–58 is cholesterol recognition/amino acid consensus (CRAC) region 1; sequence LTIPKDYDIEK. Cholesterol recognition/amino acid consensus (CARC) region regions lie at residues 280 to 287 and 340 to 348; these read KAISSYVL and KFGYDGDSL. The tract at residues 349-354 is cholesterol recognition/amino acid consensus (CRAC) region 2; it reads LAEYQR. A cholesterol recognition/amino acid consensus (CARC) region 3 region spans residues 444-453; sequence RHAHYLERNL. Lys-558 carries the N6-myristoyl lysine lipid modification. A Hemolysin-type calcium-binding 1 repeat occupies 613–639; the sequence is VNAGSGNDDIFAGQGKMNVDGGTGHDR. Lys-689 is lipidated: N6-myristoyl lysine. Hemolysin-type calcium-binding repeat units follow at residues 722–756 and 757–791; these read GSQFSDTFKGSKFADIFHGGDGNDTLEGNDGDDRL and FGGNGDDHLYGGNGDDLLDGGKGNDVINGGDGNDV.

This sequence belongs to the RTX prokaryotic toxin (TC 1.C.11) family. In terms of processing, myristoylated by RtxC; the toxin only becomes active when modified. Mainly myristoylated; a very minor fraction is acylated with hydroxymyristoyl, lauroyl and palmitoleyl chains fatty acyl groups. Fatty acylation is involved in binding to host membranes and promotes the irreversible insertion of RtxA into the host cell membrane.

It is found in the secreted. Its subcellular location is the host cell membrane. Its function is as follows. Bacterial cytolysin that attacks host cell membranes and causes cell rupture by forming a pore. Binds and permeabilizes target cells by forming cation-selective pores. Constitutes the key virulence cytotoxin of K.kingae. Binds cholesterol and oligosaccharides on the surface of host cells. Does not bind beta-2 integrin (ITGB2) on the host cell surface. This is Cytolysin RtxA from Kingella kingae.